A 254-amino-acid polypeptide reads, in one-letter code: Wall-associated protein (254 aa).

Positions 25 to 46 (DRVEPKEEPPKVPQAPKRDLKP) are disordered.

The protein localises to the secreted. It is found in the cell wall. The chain is Wall-associated protein (wapA') from Geobacillus stearothermophilus (Bacillus stearothermophilus).